The primary structure comprises 207 residues: Transcription factor DYT1 (207 aa).

Positions 1 to 38 (MGGGSRFQEPVRMSRRKQVTKEKEEDENFKSPNLEAER) are disordered. The region spanning 28-77 (NFKSPNLEAERRRREKLHCRLMALRSHVPIVTNMTKASIVEDAITYIGEL) is the bHLH domain.

Homodimer. As to expression, mostly expressed in anthers, and, to a lower extent, in young inflorescences undergoing meiosis and siliques.

Its subcellular location is the nucleus. Transcription factor. Involved in the control of tapetum development. Required for male fertility and pollen differentiation, especially during callose deposition. The sequence is that of Transcription factor DYT1 from Arabidopsis thaliana (Mouse-ear cress).